A 473-amino-acid chain; its full sequence is Protein translocase subunit SecD (473 aa).

6 consecutive transmembrane segments (helical) span residues 5 to 25 (VLVKWAVILVALFASVYLLYP), 316 to 336 (ASLYGIVIILILMAIYYKSGG), 337 to 357 (IISNIALILNLVFLLAAMAAF), 364 to 384 (PGIAGIILSLAMAIDANVLIL), 409 to 429 (WSAIFDSNFTSWIVALFLFQF), and 436 to 456 (GFAVTLTLGLLIGVFTSVFVT).

The protein belongs to the SecD/SecF family. SecD subfamily. In terms of assembly, forms a complex with SecF. Part of the essential Sec protein translocation apparatus which comprises SecA, SecYEG and auxiliary proteins SecDF. Other proteins may also be involved.

The protein resides in the cell inner membrane. Its function is as follows. Part of the Sec protein translocase complex. Interacts with the SecYEG preprotein conducting channel. SecDF uses the proton motive force (PMF) to complete protein translocation after the ATP-dependent function of SecA. This is Protein translocase subunit SecD from Elusimicrobium minutum (strain Pei191).